The chain runs to 306 residues: Bifunctional protein FolD 1 (306 aa).

Residues 170–172 (GRG), T199, and V240 each bind NADP(+). The tract at residues 285-306 (ARRTRSSRTPVRLPDSGAPAGR) is disordered.

Belongs to the tetrahydrofolate dehydrogenase/cyclohydrolase family. In terms of assembly, homodimer.

The enzyme catalyses (6R)-5,10-methylene-5,6,7,8-tetrahydrofolate + NADP(+) = (6R)-5,10-methenyltetrahydrofolate + NADPH. It catalyses the reaction (6R)-5,10-methenyltetrahydrofolate + H2O = (6R)-10-formyltetrahydrofolate + H(+). Its pathway is one-carbon metabolism; tetrahydrofolate interconversion. Functionally, catalyzes the oxidation of 5,10-methylenetetrahydrofolate to 5,10-methenyltetrahydrofolate and then the hydrolysis of 5,10-methenyltetrahydrofolate to 10-formyltetrahydrofolate. This chain is Bifunctional protein FolD 1, found in Salinispora tropica (strain ATCC BAA-916 / DSM 44818 / JCM 13857 / NBRC 105044 / CNB-440).